The primary structure comprises 295 residues: Origin of replication complex subunit 6 (295 aa).

The disordered stretch occupies residues 212 to 295; it reads PSKRKHDDDS…MALEVSSAAN (84 aa). Acidic residues predominate over residues 220-236; that stretch reads DSDSSGESSGDDQDELD. The segment covering 254–263 has biased composition (polar residues); that stretch reads WKSSVLSNKQ.

This sequence belongs to the ORC6 family. Component of the origin recognition complex (ORC) composed of at least ORC1, ORC2, ORC3, ORC4, ORC5 and ORC6. ORC is regulated in a cell-cycle and development dependent manner. It is sequentially assembled at the exit from anaphase of mitosis and disassembled as cells enter S phase.

The protein localises to the nucleus. Its function is as follows. Component of the origin recognition complex (ORC) that binds origins of replication. DNA-binding is ATP-dependent. The specific DNA sequences that define origins of replication have not been identified yet. ORC is required to assemble the pre-replication complex necessary to initiate DNA replication. This is Origin of replication complex subunit 6 from Oryza sativa subsp. japonica (Rice).